Reading from the N-terminus, the 284-residue chain is L-ribulose-5-phosphate 3-epimerase UlaE (284 aa).

This sequence belongs to the L-ribulose-5-phosphate 3-epimerase family.

It catalyses the reaction L-ribulose 5-phosphate = L-xylulose 5-phosphate. Its pathway is cofactor degradation; L-ascorbate degradation; D-xylulose 5-phosphate from L-ascorbate: step 3/4. Its function is as follows. Catalyzes the isomerization of L-xylulose-5-phosphate to L-ribulose-5-phosphate. Is involved in the anaerobic L-ascorbate utilization. The sequence is that of L-ribulose-5-phosphate 3-epimerase UlaE from Escherichia coli (strain 55989 / EAEC).